Reading from the N-terminus, the 77-residue chain is Serine protease inhibitor 1 (77 aa).

The first 17 residues, 1–17, serve as a signal peptide directing secretion; it reads MMFTPLIVLTLLVLATA. Disulfide bonds link Cys21–Cys53, Cys30–Cys48, Cys33–Cys44, Cys37–Cys74, and Cys55–Cys68. The 54-residue stretch at 21-74 folds into the TIL domain; sequence CGPNEQWSDCPGCELQCGESDKPCPAMCGDPKCYCSPDQYRRIPDGRCIRKIQC.

It localises to the secreted. In terms of biological role, defends the organism against the host's proteinases. The polypeptide is Serine protease inhibitor 1 (Anisakis simplex (Herring worm)).